The chain runs to 684 residues: Glycine--tRNA ligase beta subunit (684 aa).

This sequence belongs to the class-II aminoacyl-tRNA synthetase family. As to quaternary structure, tetramer of two alpha and two beta subunits.

The protein localises to the cytoplasm. The catalysed reaction is tRNA(Gly) + glycine + ATP = glycyl-tRNA(Gly) + AMP + diphosphate. The sequence is that of Glycine--tRNA ligase beta subunit from Pseudomonas aeruginosa (strain LESB58).